We begin with the raw amino-acid sequence, 865 residues long: Leucine--tRNA ligase (865 aa).

The 'HIGH' region motif lies at 44-54 (PYPSGRIHVGH). A 'KMSKS' region motif is present at residues 625–629 (KMSKS). Lysine 628 is a binding site for ATP.

It belongs to the class-I aminoacyl-tRNA synthetase family.

Its subcellular location is the cytoplasm. The enzyme catalyses tRNA(Leu) + L-leucine + ATP = L-leucyl-tRNA(Leu) + AMP + diphosphate. The polypeptide is Leucine--tRNA ligase (Maricaulis maris (strain MCS10) (Caulobacter maris)).